A 253-amino-acid chain; its full sequence is HTH-type transcriptional regulator YdeO (253 aa).

One can recognise an HTH araC/xylS-type domain in the interval 137-233; the sequence is GKVRNIVNMK…GNSPKRVSKE (97 aa). 2 DNA-binding regions (H-T-H motif) span residues 154–175 and 200–223; these read KDIC…KQEQ and VNKI…RKHF.

Functionally, induces the expression of gadE and mdtEF. Could also regulate the expression of other genes involved in acid resistance. This is HTH-type transcriptional regulator YdeO from Escherichia coli O157:H7.